The following is a 162-amino-acid chain: Phosphopantetheine adenylyltransferase (162 aa).

Threonine 14 contacts substrate. ATP contacts are provided by residues threonine 14 to phenylalanine 15 and histidine 22. 3 residues coordinate substrate: lysine 46, leucine 78, and arginine 92. ATP contacts are provided by residues glycine 93–arginine 95, glutamate 103, and histidine 128–serine 134.

This sequence belongs to the bacterial CoaD family. In terms of assembly, homohexamer. The cofactor is Mg(2+).

It localises to the cytoplasm. The enzyme catalyses (R)-4'-phosphopantetheine + ATP + H(+) = 3'-dephospho-CoA + diphosphate. Its pathway is cofactor biosynthesis; coenzyme A biosynthesis; CoA from (R)-pantothenate: step 4/5. Reversibly transfers an adenylyl group from ATP to 4'-phosphopantetheine, yielding dephospho-CoA (dPCoA) and pyrophosphate. This Xylella fastidiosa (strain M23) protein is Phosphopantetheine adenylyltransferase.